Reading from the N-terminus, the 338-residue chain is Ketol-acid reductoisomerase (NADP(+)) (338 aa).

The KARI N-terminal Rossmann domain occupies 1–181 (MKVFYDKDAD…GGGRAGIIET (181 aa)). NADP(+) is bound by residues 24-27 (YGSQ), Arg47, and Ser52. His107 is a catalytic residue. An NADP(+)-binding site is contributed by Gly133. The 146-residue stretch at 182-327 (NFREETETDL…AKLRAMMPWI (146 aa)) folds into the KARI C-terminal knotted domain. Mg(2+) contacts are provided by Asp190, Glu194, Glu226, and Glu230. Substrate is bound at residue Ser251.

This sequence belongs to the ketol-acid reductoisomerase family. Mg(2+) is required as a cofactor.

It carries out the reaction (2R)-2,3-dihydroxy-3-methylbutanoate + NADP(+) = (2S)-2-acetolactate + NADPH + H(+). The enzyme catalyses (2R,3R)-2,3-dihydroxy-3-methylpentanoate + NADP(+) = (S)-2-ethyl-2-hydroxy-3-oxobutanoate + NADPH + H(+). It participates in amino-acid biosynthesis; L-isoleucine biosynthesis; L-isoleucine from 2-oxobutanoate: step 2/4. Its pathway is amino-acid biosynthesis; L-valine biosynthesis; L-valine from pyruvate: step 2/4. In terms of biological role, involved in the biosynthesis of branched-chain amino acids (BCAA). Catalyzes an alkyl-migration followed by a ketol-acid reduction of (S)-2-acetolactate (S2AL) to yield (R)-2,3-dihydroxy-isovalerate. In the isomerase reaction, S2AL is rearranged via a Mg-dependent methyl migration to produce 3-hydroxy-3-methyl-2-ketobutyrate (HMKB). In the reductase reaction, this 2-ketoacid undergoes a metal-dependent reduction by NADPH to yield (R)-2,3-dihydroxy-isovalerate. The protein is Ketol-acid reductoisomerase (NADP(+)) of Ralstonia nicotianae (strain ATCC BAA-1114 / GMI1000) (Ralstonia solanacearum).